Reading from the N-terminus, the 851-residue chain is DNA mismatch repair protein MutS (851 aa).

602 to 609 (GPNMSGKS) provides a ligand contact to ATP.

The protein belongs to the DNA mismatch repair MutS family.

Its function is as follows. This protein is involved in the repair of mismatches in DNA. It is possible that it carries out the mismatch recognition step. This protein has a weak ATPase activity. This Streptococcus pyogenes serotype M4 (strain MGAS10750) protein is DNA mismatch repair protein MutS.